Reading from the N-terminus, the 332-residue chain is ADP-L-glycero-D-manno-heptose-6-epimerase (332 aa).

NADP(+)-binding positions include 10–11, 31–32, Lys38, Lys53, 75–79, and Asn92; these read MI, DK, and MGACS. Tyr145 functions as the Proton acceptor in the catalytic mechanism. Residue Lys149 coordinates NADP(+). A substrate-binding site is contributed by Asn173. Residues Val174 and Lys182 each coordinate NADP(+). The Proton acceptor role is filled by Lys182. Substrate contacts are provided by residues Arg184, His191, 205–208, Arg219, and Tyr290; that span reads FKSY.

The protein belongs to the NAD(P)-dependent epimerase/dehydratase family. HldD subfamily. As to quaternary structure, homopentamer. Requires NADP(+) as cofactor.

The enzyme catalyses ADP-D-glycero-beta-D-manno-heptose = ADP-L-glycero-beta-D-manno-heptose. It participates in nucleotide-sugar biosynthesis; ADP-L-glycero-beta-D-manno-heptose biosynthesis; ADP-L-glycero-beta-D-manno-heptose from D-glycero-beta-D-manno-heptose 7-phosphate: step 4/4. In terms of biological role, catalyzes the interconversion between ADP-D-glycero-beta-D-manno-heptose and ADP-L-glycero-beta-D-manno-heptose via an epimerization at carbon 6 of the heptose. This is ADP-L-glycero-D-manno-heptose-6-epimerase from Fusobacterium nucleatum subsp. nucleatum (strain ATCC 25586 / DSM 15643 / BCRC 10681 / CIP 101130 / JCM 8532 / KCTC 2640 / LMG 13131 / VPI 4355).